The following is a 138-amino-acid chain: Nucleoside diphosphate kinase (138 aa).

ATP-binding residues include Lys-9, Phe-57, Arg-85, Thr-91, Arg-102, and Asn-112. His-115 (pros-phosphohistidine intermediate) is an active-site residue.

This sequence belongs to the NDK family. It depends on Mg(2+) as a cofactor.

It localises to the cytoplasm. It catalyses the reaction a 2'-deoxyribonucleoside 5'-diphosphate + ATP = a 2'-deoxyribonucleoside 5'-triphosphate + ADP. The catalysed reaction is a ribonucleoside 5'-diphosphate + ATP = a ribonucleoside 5'-triphosphate + ADP. Major role in the synthesis of nucleoside triphosphates other than ATP. The ATP gamma phosphate is transferred to the NDP beta phosphate via a ping-pong mechanism, using a phosphorylated active-site intermediate. The protein is Nucleoside diphosphate kinase of Picrophilus torridus (strain ATCC 700027 / DSM 9790 / JCM 10055 / NBRC 100828 / KAW 2/3).